We begin with the raw amino-acid sequence, 287 residues long: Probable endonuclease 4 (287 aa).

9 residues coordinate Zn(2+): H69, H109, E144, D178, H181, H215, D228, H230, and E260.

This sequence belongs to the AP endonuclease 2 family. The cofactor is Zn(2+).

The enzyme catalyses Endonucleolytic cleavage to 5'-phosphooligonucleotide end-products.. In terms of biological role, endonuclease IV plays a role in DNA repair. It cleaves phosphodiester bonds at apurinic or apyrimidinic (AP) sites, generating a 3'-hydroxyl group and a 5'-terminal sugar phosphate. The protein is Probable endonuclease 4 of Thermotoga petrophila (strain ATCC BAA-488 / DSM 13995 / JCM 10881 / RKU-1).